The primary structure comprises 722 residues: Pre-B-cell leukemia transcription factor-interacting protein 1 (722 aa).

A compositionally biased stretch (polar residues) spans 1-10 (MASCPDSDNS). The disordered stretch occupies residues 1-180 (MASCPDSDNS…TAAVDGEDQA (180 aa)). The span at 88–97 (DDGHGTKRPG) shows a compositional bias: basic and acidic residues. Residues S133, S144, S145, and S146 each carry the phosphoserine modification. Residue T150 is modified to Phosphothreonine. Residue S166 is modified to Phosphoserine. Coiled coils occupy residues 266-346 (LLLD…RGVD) and 373-401 (DTSLLEQHKQLEAEAKALRQELQKQWQLL). Positions 442–453 (QGINTGRSSNDS) are enriched in polar residues. Disordered stretches follow at residues 442 to 562 (QGIN…SPDS) and 691 to 722 (RRSKKKEKQPWNHRAVGPREEHSRHPHHYHQG). 2 stretches are compositionally biased toward basic and acidic residues: residues 465–536 (HPRE…DPKV) and 546–559 (SGERQKHSWGKDNS). The Nuclear localization signal motif lies at 482–502 (QKAEHWKLKKEESGQDRKKSW). S559 is modified (phosphoserine). Residues 686–711 (DKALKRRSKKKEKQPWNHRAVGPREE) carry the Nuclear localization signal motif.

As to quaternary structure, interacts with ESR1, PBX1, PBX2 and PBX3. Interacts with TEX11.

It is found in the cytoplasm. It localises to the cytoskeleton. The protein resides in the nucleus. Its function is as follows. Regulator of pre-B-cell leukemia transcription factors (BPXs) function. Inhibits the binding of PBX1-HOX complex to DNA and blocks the transcriptional activity of E2A-PBX1. Tethers estrogen receptor-alpha (ESR1) to microtubules and allows them to influence estrogen receptors-alpha signaling. This Rattus norvegicus (Rat) protein is Pre-B-cell leukemia transcription factor-interacting protein 1 (Pbxip1).